The sequence spans 466 residues: Histidine--tRNA ligase (466 aa).

This sequence belongs to the class-II aminoacyl-tRNA synthetase family. In terms of assembly, homodimer.

It is found in the cytoplasm. The catalysed reaction is tRNA(His) + L-histidine + ATP = L-histidyl-tRNA(His) + AMP + diphosphate + H(+). This is Histidine--tRNA ligase from Bifidobacterium longum subsp. infantis (strain ATCC 15697 / DSM 20088 / JCM 1222 / NCTC 11817 / S12).